A 474-amino-acid polypeptide reads, in one-letter code: Gasdermin-C (474 aa).

Residues 1-237 (MLYTFDQVSK…TCAILLSANA (237 aa)) form a triggers pyroptosis region.

The protein belongs to the gasdermin family. Homooligomer; homooligomeric ring-shaped pore complex containing 27-28 subunits when inserted in the membrane. In terms of processing, cleavage by CASP8 relieves autoinhibition by releasing the N-terminal moiety (Gasdermin-C, N-terminal) that initiates pyroptosis. Palmitoylated.

It localises to the cytoplasm. The protein resides in the cytosol. Its subcellular location is the cell membrane. The full-length protein before cleavage is inactive: intramolecular interactions between N- and C-terminal domains mediate autoinhibition in the absence of activation signal. The intrinsic pyroptosis-inducing activity is carried by the released N-terminal moiety (Gasdermin-C, N-terminal) following cleavage by caspase CASP8. In terms of biological role, this form constitutes the precursor of the pore-forming protein: upon cleavage, the released N-terminal moiety (Gasdermin-C, N-terminal) binds to membranes and forms pores, triggering pyroptosis. Pore-forming protein that causes membrane permeabilization and pyroptosis. Produced by the cleavage of gasdermin-C by caspase CASP8 in response to death signals. After cleavage, moves to the plasma membrane where it strongly binds to membrane inner leaflet lipids. Homooligomerizes within the membrane and forms pores of 10-15 nanometers (nm) of inner diameter, triggering pyroptosis. The polypeptide is Gasdermin-C (Rattus norvegicus (Rat)).